The following is a 217-amino-acid chain: Small ribosomal subunit protein uS3 (217 aa).

Residues 38 to 106 form the KH type-2 domain; that stretch reads IRKFIDNELK…KVHINVIEIK (69 aa).

It belongs to the universal ribosomal protein uS3 family. In terms of assembly, part of the 30S ribosomal subunit. Forms a tight complex with proteins S10 and S14.

Its function is as follows. Binds the lower part of the 30S subunit head. Binds mRNA in the 70S ribosome, positioning it for translation. This Staphylococcus haemolyticus (strain JCSC1435) protein is Small ribosomal subunit protein uS3.